Reading from the N-terminus, the 367-residue chain is Glutamate 5-kinase (367 aa).

K8 contacts ATP. Residues S49, D136, and N148 each coordinate substrate. Residues 168 to 169 (TD) and 210 to 216 (TGGMATK) each bind ATP. Positions 275–353 (TGKLYLDRGA…EEIPTILGYS (79 aa)) constitute a PUA domain.

It belongs to the glutamate 5-kinase family.

The protein localises to the cytoplasm. The catalysed reaction is L-glutamate + ATP = L-glutamyl 5-phosphate + ADP. Its pathway is amino-acid biosynthesis; L-proline biosynthesis; L-glutamate 5-semialdehyde from L-glutamate: step 1/2. In terms of biological role, catalyzes the transfer of a phosphate group to glutamate to form L-glutamate 5-phosphate. The chain is Glutamate 5-kinase from Cyanothece sp. (strain PCC 7425 / ATCC 29141).